The following is a 39-amino-acid chain: uncharacterized protein (39 aa).

The first 21 residues, 1 to 21 (MHLRSRWWLALLYCKDPVSRS), serve as a signal peptide directing secretion.

This is an uncharacterized protein from Saccharomyces cerevisiae (strain ATCC 204508 / S288c) (Baker's yeast).